Reading from the N-terminus, the 400-residue chain is Envelope glycoprotein M (400 aa).

Over 1–16 the chain is Intravirion; the sequence is MRASKSDRFLMSSWVK. Residues 17 to 37 form a helical membrane-spanning segment; sequence LLFVAVIMYICSAVVPMAATY. The Virion surface segment spans residues 38–76; that stretch reads EGLGFPCYFNNLVNYSALNLTVRNSAKHLTPTLFLEKPE. A helical transmembrane segment spans residues 77 to 97; the sequence is MLVYIFWTFIVDGIAIVYYCL. The Intravirion segment spans residues 98–113; that stretch reads AAVAVYRAKHVHATTM. Residues 114–134 form a helical membrane-spanning segment; sequence MSMQSWIALLGSHSVLYVAIL. At 135–152 the chain is on the virion surface side; sequence RMWSMQLFIHVLSYKHVL. The chain crosses the membrane as a helical span at residues 153–173; that stretch reads MAAFVYCIHFCISFAHIQSLI. Over 174 to 208 the chain is Intravirion; that stretch reads TCNSAQWEIPLLEQHVPDNTMMESLLTRWKPVCVN. Residues 209–229 form a helical membrane-spanning segment; it reads LYLSTTALEMLLFSLSTMMAV. Residues 230 to 234 lie on the Virion surface side of the membrane; that stretch reads GNSFY. Residues 235–255 form a helical membrane-spanning segment; the sequence is VLVSDAIFGAVNMFLALTVVW. At 256–270 the chain is on the intravirion side; sequence YINTEFFLVKFMRRQ. Residues 271 to 291 traverse the membrane as a helical segment; sequence VGFYVGVFVGYLILLLPVIRY. Over 292 to 300 the chain is Virion surface; that stretch reads ENAFVQANL. The chain crosses the membrane as a helical span at residues 301-321; it reads HYIVAINISCIPILCILAIVI. At 322 to 400 the chain is on the intravirion side; it reads RVIRSDWGLC…EIDETQMIFI (79 aa). The disordered stretch occupies residues 348 to 394; the sequence is DRTPTVHQKPPPLPAKTRARAKVKDISTPAPRTQYQSDHESDSEIDE.

This sequence belongs to the herpesviridae glycoprotein M family. In terms of assembly, interacts (via N-terminus) with gN (via N-terminus). The gM-gN heterodimer forms the gCII complex. In terms of processing, N-glycosylated.

The protein localises to the virion membrane. It localises to the host Golgi apparatus. Its subcellular location is the host trans-Golgi network. The protein resides in the host endosome membrane. It is found in the host nucleus inner membrane. Its function is as follows. Envelope glycoprotein important for virion assembly and egress. Plays a role in the correct incorporation of gH-gL into virion membrane. Directs the glycoprotein N (gN) to the host trans-Golgi network. The protein is Envelope glycoprotein M of Homo sapiens (Human).